The chain runs to 792 residues: Cullin-4 (792 aa).

The span at 1–10 (MSLPTKRSTF) shows a compositional bias: polar residues. The segment at 1–43 (MSLPTKRSTFSAASASDDSSYSSPPMKKAKNDLHHSPQHPNTA) is disordered. The segment covering 11–23 (SAASASDDSSYSS) has biased composition (low complexity). The Cullin neddylation domain maps to 724–784 (DRQYQIDAAI…REYLEREKSN (61 aa)). A Glycyl lysine isopeptide (Lys-Gly) (interchain with G-Cter in NEDD8) cross-link involves residue Lys-738.

This sequence belongs to the cullin family. In terms of assembly, interacts with COP10, CSN3, CSN4, CSN5, CSN8, DDB1A, DDB1B, DDB2, DET1 and RBX1. Neddylated (rubylated). Deneddylated via its interaction with the COP9 signalosome (CSN) complex. Ubiquitous.

Its subcellular location is the nucleus. It participates in protein modification; protein ubiquitination. Component of the CUL4-RBX1-CDD (COP10-DDB1a-DET1) E3 ubiquitin-protein ligase complex which mediates the ubiquitination and subsequent proteasomal degradation of target proteins. Participates in the CDD complex to light-mediated control of development. May repress photomorphogenesis through enhancing COP1 E3 ubiquitin-protein ligase activity. Acts together with the CUL4-DDB1-COP1-SPA E3 ubiquitin-protein ligase complexes in the repression of photomorphogenesis and flowering time. Component ot the CUL4-RBX1-DDB1-PRL1 E3 ubiquitin-protein ligase complex which mediates ubiquitination and subsequent degradation of AKIN10. Component of the CUL4-RBX1-DDB1-DWA1/DWA2 E3 ubiquitin-protein ligase complex that acts as a negative regulator in abscisic acid (ABA) signaling and may target ABI5 for degradation. This chain is Cullin-4 (CUL4), found in Arabidopsis thaliana (Mouse-ear cress).